A 217-amino-acid polypeptide reads, in one-letter code: Small ribosomal subunit protein uS3 (217 aa).

The KH type-2 domain maps to Ile-40–Arg-110.

The protein belongs to the universal ribosomal protein uS3 family. Part of the 30S ribosomal subunit. Forms a tight complex with proteins S10 and S14.

Functionally, binds the lower part of the 30S subunit head. Binds mRNA in the 70S ribosome, positioning it for translation. This chain is Small ribosomal subunit protein uS3, found in Rickettsia felis (strain ATCC VR-1525 / URRWXCal2) (Rickettsia azadi).